Here is an 896-residue protein sequence, read N- to C-terminus: MDIENTNKPDVILNKKSSKAADSKPESGKTDSKRKVVVKVSKTSAGKSKKPESSSEESSGGKASGKQVISVKKASSQSSKPAEASVKEKKPDERLEETKKTAPRFEDKKSDAPSAQNEKRSFDSAKKEEKQTERKKPTPSSIDSIDFASKRPNVKAGNLADSGRRNNRGQGNRPQRPGGQGQGQPGQGRRRESNFSGAQARAYSDGKKQGFRTGQGGQQGRPGDRPQNRPGFGGPRPGAAPAPIPVEKNKAQTNKKAHKAKKEIYNKKNKEEEFFEERLLNQKKKQKEKIHNIPKQIEIMESISVSELAKKMNLKASELIGKLMGMGMMVTMNQSIDADTATILASEYDCDVKIVSLYDETVIESKEDDLSELQPRPPVVTIMGHVDHGKTKTLDAIRSSNVIAGEFGGITQHIGAYTVNTHGGKITFLDTPGHEAFTMMRARGAEITDIVVLVVAADDGVMPQTIEAINHARDAKVPIIVAVNKVDKPEANVDKVKTRLSELGLMPEEWGGDTMFVEISALKKLGLDNLLDTILLQAEVLELKANYTCNAEGKVIESRIDHGRGVVATIIVQRGTLRTGDPYVAGIYSGRVRAIFNDRGEKIDEATPSMPVEILGLEGMPNAGDPFQVTDSERIARQISDKRQELKRFEDSRNVKKVTLDNLYETIHDGEILELKVIIKGDVQGSVEALKQSLEKLSTPEIRLNVIHASAGAINDSDVMLAAADSNALIIGFNVRPTPQAKLLADQEKVDIRKYTVIYKAVEEIQLAMEGMLSPDIKEQVIGMVEVRNTFKVPKIGKIAGCYVLEGVVKRNCAVHVIRDGIVVHSGKLSSLKRFKDDAKEVAAGFECGIGIEDFNDIQVDDQLEIIEMIQVARKLSDSEKYKAPEIKEEGTETDE.

Positions 1-260 (MDIENTNKPD…AQTNKKAHKA (260 aa)) are disordered. Residues 19–34 (KAADSKPESGKTDSKR) show a composition bias toward basic and acidic residues. A compositionally biased stretch (low complexity) spans 56-66 (EESSGGKASGK). Positions 85–136 (SVKEKKPDERLEETKKTAPRFEDKKSDAPSAQNEKRSFDSAKKEEKQTERKK) are enriched in basic and acidic residues. Low complexity predominate over residues 168–177 (RGQGNRPQRP). The 170-residue stretch at 375-544 (PRPPVVTIMG…LLQAEVLELK (170 aa)) folds into the tr-type G domain. Residues 384–391 (GHVDHGKT) form a G1 region. 384–391 (GHVDHGKT) provides a ligand contact to GTP. Residues 409–413 (GITQH) form a G2 region. Positions 430–433 (DTPG) are G3. Residues 430–434 (DTPGH) and 484–487 (NKVD) each bind GTP. Residues 484 to 487 (NKVD) form a G4 region. The segment at 520-522 (SAL) is G5. Residues 877 to 896 (SDSEKYKAPEIKEEGTETDE) are disordered.

The protein belongs to the TRAFAC class translation factor GTPase superfamily. Classic translation factor GTPase family. IF-2 subfamily.

It localises to the cytoplasm. In terms of biological role, one of the essential components for the initiation of protein synthesis. Protects formylmethionyl-tRNA from spontaneous hydrolysis and promotes its binding to the 30S ribosomal subunits. Also involved in the hydrolysis of GTP during the formation of the 70S ribosomal complex. This is Translation initiation factor IF-2 from Treponema denticola (strain ATCC 35405 / DSM 14222 / CIP 103919 / JCM 8153 / KCTC 15104).